Consider the following 336-residue polypeptide: tRNA N6-adenosine threonylcarbamoyltransferase (336 aa).

Fe cation is bound by residues histidine 114 and histidine 118. Residues 136–140, aspartate 169, glycine 182, aspartate 186, and asparagine 275 contribute to the substrate site; that span reads LVSGG. A Fe cation-binding site is contributed by aspartate 301.

The protein belongs to the KAE1 / TsaD family. The cofactor is Fe(2+).

The protein localises to the cytoplasm. The catalysed reaction is L-threonylcarbamoyladenylate + adenosine(37) in tRNA = N(6)-L-threonylcarbamoyladenosine(37) in tRNA + AMP + H(+). Its function is as follows. Required for the formation of a threonylcarbamoyl group on adenosine at position 37 (t(6)A37) in tRNAs that read codons beginning with adenine. Is involved in the transfer of the threonylcarbamoyl moiety of threonylcarbamoyl-AMP (TC-AMP) to the N6 group of A37, together with TsaE and TsaB. TsaD likely plays a direct catalytic role in this reaction. This is tRNA N6-adenosine threonylcarbamoyltransferase from Streptococcus pneumoniae (strain P1031).